The sequence spans 850 residues: Pro-neuregulin-2, membrane-bound isoform (850 aa).

The tract at residues 1–96 (MRQVCCSALP…AAAAGGMRRD (96 aa)) is disordered. Positions 1–111 (MRQVCCSALP…SMLLFGVSLA (111 aa)) are excised as a propeptide. Over residues 20–59 (SSYSDSSSSSSERSSSSSSSSSESGSSSRSSSNNSSISRP) the composition is skewed to low complexity. N-linked (GlcNAc...) asparagine glycosylation is found at Asn-52 and Asn-53. Pro residues predominate over residues 60–74 (AAPPEPRPQQQPQPR). Over residues 75-92 (SPAARRAAARSRAAAAGG) the composition is skewed to low complexity. At 112–405 (CYSPSLKSVQ…QKAEELYQKR (294 aa)) the chain is on the extracellular side. Asn-147, Asn-278, and Asn-346 each carry an N-linked (GlcNAc...) asparagine glycan. An Ig-like C2-type domain is found at 237–332 (PKLKKMKSQT…RGRLYVNSVS (96 aa)). Disulfide bonds link Cys-257-Cys-311, Cys-345-Cys-359, Cys-353-Cys-370, and Cys-372-Cys-381. The EGF-like domain maps to 341–382 (HARKCNETAKSYCVNGGVCYYIEGINQLSCKCPNGFFGQRCL). A helical transmembrane segment spans residues 406-426 (VLTITGICVALLVVGIVCVVA). Topologically, residues 427–850 (YCKTKKQRKQ…PRAKQDSAPL (424 aa)) are cytoplasmic. 5 disordered regions span residues 492–535 (TFSG…DSQS), 566–585 (EERR…SLRD), 647–681 (LLRH…YYPA), 700–788 (LPAS…DGAL), and 801–850 (AHDA…SAPL). Low complexity predominate over residues 494-506 (SGSHSCSPSHHCS). Basic and acidic residues predominate over residues 514-527 (HRHESHTWSLERSE). Positions 651 to 665 (PAPPGPGPGPGPGPG) are enriched in pro residues. Low complexity predominate over residues 750 to 767 (GLAAQRARAARDSLSLSS).

The protein belongs to the neuregulin family. Interacts with ERBB3 and ERBB4. Proteolytic cleavage close to the plasma membrane on the external face leads to the release of the soluble growth factor form. Post-translationally, extensive glycosylation precedes the proteolytic cleavage. In terms of tissue distribution, restricted to the cerebellum in the adult.

It is found in the cell membrane. The protein resides in the secreted. Direct ligand for ERBB3 and ERBB4 tyrosine kinase receptors. Concomitantly recruits ERBB1 and ERBB2 coreceptors, resulting in ligand-stimulated tyrosine phosphorylation and activation of the ERBB receptors. May also promote the heterodimerization with the EGF receptor. This chain is Pro-neuregulin-2, membrane-bound isoform (NRG2), found in Homo sapiens (Human).